The primary structure comprises 379 residues: Quinolinate synthase (379 aa).

Iminosuccinate contacts are provided by H60 and S81. Residue C126 participates in [4Fe-4S] cluster binding. Iminosuccinate-binding positions include 152 to 154 (YAN) and S169. Residue C213 coordinates [4Fe-4S] cluster. Residues 239–241 (HPE) and T256 contribute to the iminosuccinate site. Residue C310 coordinates [4Fe-4S] cluster.

It belongs to the quinolinate synthase family. Type 1 subfamily. [4Fe-4S] cluster is required as a cofactor.

The protein resides in the cytoplasm. The enzyme catalyses iminosuccinate + dihydroxyacetone phosphate = quinolinate + phosphate + 2 H2O + H(+). It participates in cofactor biosynthesis; NAD(+) biosynthesis; quinolinate from iminoaspartate: step 1/1. Its function is as follows. Catalyzes the condensation of iminoaspartate with dihydroxyacetone phosphate to form quinolinate. The polypeptide is Quinolinate synthase (Herminiimonas arsenicoxydans).